Consider the following 375-residue polypeptide: Myb family transcription factor PHL5 (375 aa).

Polar residues predominate over residues 159–171; sequence TSSQHQPKQSHPR. A disordered region spans residues 159-178; it reads TSSQHQPKQSHPRFSSPPSF. The HTH myb-type domain occupies 189 to 249; the sequence is CVNKTRIRWT…HLQKYRIAKY (61 aa). The segment at residues 220–245 is a DNA-binding region (H-T-H motif); it reads PKAILKRMDSDGLTIFHVKSHLQKYR. Residues 279-299 are a coiled coil; sequence KEALQLQLDVQRHLHEQLEIQ. The LHEQLE motif lies at 292–297; sequence LHEQLE.

It belongs to the MYB-CC family.

The protein resides in the nucleus. The protein is Myb family transcription factor PHL5 of Arabidopsis thaliana (Mouse-ear cress).